The chain runs to 887 residues: MGEAEKFHYIYSCDLDINVQLKIGSLEGKREQKSYKAVLEDPMLKFSGLYQETCSDLYVTCQVFAEGKPLALPVRTSYKAFSTRWNWNEWLKLPVKYPDLPRNAQVALTIWDVYGPGSAVPVGGTTVSLFGKYGMFRQGMHDLKVWPNVEADGSEPTRTPGRTSSTLSEDQMSRLAKLTKAHRQGHMVKVDWLDRLTFREIEMINESEKRSSNFMYLMVEFRCVKCDDKEYGIVYYEKDGDESSPILTSFELVKVPDPQMSMENLVESKHHKLARSLRSGPSDHDLKPNATTRDQLNIIVSYPPTKQLTYEEQDLVWKFRYYLTNQEKALTKFLKCVNWDLPQEAKQALELLGKWKPMDVEDSLELLSSHYTNPTVRRYAVARLRQADDEDLLMYLLQLVQALKYENFDDIKNGLEPTKKDSQTSASESLSNSGVSSGDIDSSQIITNPLPPVASPPPASKAKEVSDGENLEQDLCTFLISRACKNSTLANYLYWYVIVECEDQDTQQRDPKTHEMYLNVMRRFSQALLKGDKSVRVMRSLLAAQQTFVDRLVHLMKAVQRESGNRKKKNERLQALLGDNEKMNLSDVELIPLPLEPQVKIRGIIPETATLFKSALMPAQLFFKTEDGGKYPVIFKHGDDLRQDQLILQIISLMDKLLRKENLDLKLTPYKVLATSTKHGFMQFIQSVPVAEVLDTEGSIQNFFRKYAPSETGPYGISAEVMDTYVKSCAGYCVITYILGVGDRHLDNLLLTKTGKLFHIDFGYILGRDPKPLPPPMKLNKEMVEGMGGTQSEQYQEFRKQCYTAFLHLRRYSNLILNLFSLMVDANIPDIALEPDKTVKKVQDKFRLDLSDEEAVHYMQSLIDESVHALFAAVVEQIHKFAQYWRK.

Residues tyrosine 35–glutamine 184 form the C2 PI3K-type domain. A disordered region spans residues valine 149 to aspartate 170. A compositionally biased stretch (polar residues) spans proline 156–aspartate 170. Threonine 163 carries the phosphothreonine; by AMPK modification. Residue serine 165 is modified to Phosphoserine; by AMPK. Serine 244, serine 261, and serine 282 each carry phosphoserine. One can recognise a PIK helical domain in the interval aspartate 283–valine 520. Positions leucine 415–serine 466 are disordered. The span at serine 425–serine 437 shows a compositional bias: low complexity. Positions proline 449–alanine 459 are enriched in pro residues. The PI3K/PI4K catalytic domain maps to isoleucine 605–phenylalanine 871. Positions leucine 611 to methionine 617 are G-loop. A catalytic loop region spans residues glycine 740–asparagine 748. The segment at histidine 759–asparagine 780 is activation loop.

The protein belongs to the PI3/PI4-kinase family. Component of the PI3K (PI3KC3/PI3K-III/class III phosphatidylinositol 3-kinase) complex the core of which is composed of the catalytic subunit PIK3C3, the regulatory subunit PIK3R4 and BECN1 associating with additional regulatory/auxiliary subunits to form alternative complex forms. Alternative complex forms containing a fourth regulatory subunit in a mutually exclusive manner are: the PI3K complex I (PI3KC3-C1) containing ATG14, and the PI3K complex II (PI3KC3-C2) containing UVRAG. PI3KC3-C1 displays a V-shaped architecture with PIK3R4 serving as a bridge between PIK3C3 and the ATG14:BECN1 subcomplex. Both, PI3KC3-C1 and PI3KC3-C2, can associate with further regulatory subunits such as RUBCN, SH3GLB1/Bif-1 and AMBRA1. PI3KC3-C1 probably associates with PIK3CB. Interacts with RAB7A in the presence of PIK3R4. Interacts with AMBRA1. Interacts with BECN1P1/BECN2. Interacts with SLAMF1. May be a component of a complex composed of RAB5A (in GDP-bound form), DYN2 and PIK3C3. Interacts with NCKAP1L. Interacts with ATG14; this interaction is increased in the absence of TMEM39A. Interacts with STEEP1; the interaction is STING1-dependent and required for trafficking of STING1 from the endoplasmic reticulum. Interacts with YWHAG. Interacts with ARMC3. Mn(2+) serves as cofactor. In terms of processing, ubiquitinated via 'Lys-29'- and 'Lys-48'-linked ubiquitination by UBE3C, promoting its degradation. Deubiquitination by ZRANB1/TRABID promotes its stabilization, leading to autophagosome maturation.

The protein localises to the midbody. The protein resides in the late endosome. Its subcellular location is the cytoplasmic vesicle. It localises to the autophagosome. It carries out the reaction a 1,2-diacyl-sn-glycero-3-phospho-(1D-myo-inositol) + ATP = a 1,2-diacyl-sn-glycero-3-phospho-(1D-myo-inositol-3-phosphate) + ADP + H(+). Its function is as follows. Catalytic subunit of the PI3K complex that mediates formation of phosphatidylinositol 3-phosphate; different complex forms are believed to play a role in multiple membrane trafficking pathways: PI3KC3-C1 is involved in initiation of autophagosomes and PI3KC3-C2 in maturation of autophagosomes and endocytosis. As part of PI3KC3-C1, promotes endoplasmic reticulum membrane curvature formation prior to vesicle budding. Involved in regulation of degradative endocytic trafficking and required for the abscission step in cytokinesis, probably in the context of PI3KC3-C2. Involved in the transport of lysosomal enzyme precursors to lysosomes. Required for transport from early to late endosomes. This Mus musculus (Mouse) protein is Phosphatidylinositol 3-kinase catalytic subunit type 3.